The following is a 382-amino-acid chain: Succinate--CoA ligase [ADP-forming] subunit beta (382 aa).

One can recognise an ATP-grasp domain in the interval 9–237 (RDLLARYGIP…PSAEPEAERR (229 aa)). Residues Lys45, 52–54 (GRG), Ile94, and Glu99 contribute to the ATP site. Residues Asn192 and Asp206 each coordinate Mg(2+). Substrate-binding positions include Asn257 and 314 to 316 (GIT).

Belongs to the succinate/malate CoA ligase beta subunit family. In terms of assembly, heterotetramer of two alpha and two beta subunits. Mg(2+) serves as cofactor.

It catalyses the reaction succinate + ATP + CoA = succinyl-CoA + ADP + phosphate. The catalysed reaction is GTP + succinate + CoA = succinyl-CoA + GDP + phosphate. It functions in the pathway carbohydrate metabolism; tricarboxylic acid cycle; succinate from succinyl-CoA (ligase route): step 1/1. Succinyl-CoA synthetase functions in the citric acid cycle (TCA), coupling the hydrolysis of succinyl-CoA to the synthesis of either ATP or GTP and thus represents the only step of substrate-level phosphorylation in the TCA. The beta subunit provides nucleotide specificity of the enzyme and binds the substrate succinate, while the binding sites for coenzyme A and phosphate are found in the alpha subunit. In Chloroflexus aggregans (strain MD-66 / DSM 9485), this protein is Succinate--CoA ligase [ADP-forming] subunit beta.